We begin with the raw amino-acid sequence, 1220 residues long: Cullin-associated NEDD8-dissociated protein 1 (1220 aa).

HEAT repeat units follow at residues 1–35 (MEEG…DANH), 42–79 (ESFP…KIPQ), 121–157 (FYTS…SLEI), 259–295 (ADYT…YQQV), 365–410 (LSRL…HVPR), 615–650 (IFLR…SVTD), 680–700 (TTAY…YLAE), 701–737 (SLLE…SILL), 738–775 (KSKN…VISK), 810–847 (FQSK…DYGK), 850–887 (LPAN…QSEK), and 1020–1057 (EVSQ…KSSV).

This sequence belongs to the CAND family.

Its subcellular location is the nucleus. Its function is as follows. Key assembly factor of SCF (SKP1-CUL1-F-box protein) E3 ubiquitin ligase complexes that promotes the exchange of the substrate-recognition F-box subunit in SCF complexes, thereby playing a key role in the cellular repertoire of SCF complexes. Acts as a F-box protein exchange factor. This is Cullin-associated NEDD8-dissociated protein 1 (knd1) from Schizosaccharomyces pombe (strain 972 / ATCC 24843) (Fission yeast).